Consider the following 381-residue polypeptide: Arf-GAP with dual PH domain-containing protein 2 (381 aa).

Residues 9-131 (KRLLELLRAP…FMADGETISL (123 aa)) form the Arf-GAP domain. The C4-type zinc-finger motif lies at 25–48 (CADCGAADPDWASYKLGIFICLNC). PH domains are found at residues 132 to 233 (PGNR…AARL) and 255 to 361 (NYLK…GVLS).

As to expression, highly expressed in placenta, spleen, kidney, skeletal muscle and adrenal gland. Weakly expressed in thyroid, liver, heart, lung, small intestine, peripheral blood leukocytes. Not detected in spinal cord, brain, stomach, trachea, colon, lymph node and bone marrow.

It is found in the cytoplasm. It localises to the cell membrane. In terms of biological role, GTPase-activating protein for the ADP ribosylation factor family (Potential). Binds phosphatidylinositol 3,4,5-trisphosphate (PtdInsP3) and inositol 1,3,4,5-tetrakisphosphate (InsP4). Possesses a stoichiometry of two binding sites for InsP4 with identical affinity. This chain is Arf-GAP with dual PH domain-containing protein 2 (ADAP2), found in Homo sapiens (Human).